The primary structure comprises 1086 residues: Formin-like protein 2 (1086 aa).

Gly-2 is lipidated: N-myristoyl glycine. The GBD/FH3 domain maps to 23-469; the sequence is LPMPEPGELE…EAIQRQSTLE (447 aa). At Ser-188 the chain carries Phosphoserine. The segment at 513 to 597 is disordered; that stretch reads SVGPTMGAAS…APPLPSAPPL (85 aa). Over residues 525–537 the composition is skewed to pro residues; that stretch reads PLPPPPPPLPPSS. The span at 538–547 shows a compositional bias: polar residues; it reads DTPETVQNGP. 2 stretches are compositionally biased toward pro residues: residues 548 to 576 and 583 to 597; these read VTPP…PLPG and PAPP…APPL. In terms of domain architecture, FH2 spans 616–1007; the sequence is IKKPIKTKFR…LMEKLLEQEA (392 aa). Positions 1040 to 1079 constitute a DAD domain; the sequence is NRHVYEGKDGAIEDIITVLKTVPFTARTAKRGSRFFCEPV.

This sequence belongs to the formin homology family.

Its subcellular location is the cytoplasm. In terms of biological role, plays a role in the regulation of cell morphology and cytoskeletal organization. Required in the cortical actin filament dynamics. The chain is Formin-like protein 2 from Homo sapiens (Human).